The primary structure comprises 441 residues: Xaa-Pro dipeptidase (441 aa).

Residues aspartate 244, aspartate 255, histidine 336, glutamate 381, and glutamate 420 each contribute to the Mn(2+) site.

Belongs to the peptidase M24B family. Bacterial-type prolidase subfamily. Mn(2+) serves as cofactor.

The enzyme catalyses Xaa-L-Pro dipeptide + H2O = an L-alpha-amino acid + L-proline. In terms of biological role, splits dipeptides with a prolyl residue in the C-terminal position. This chain is Xaa-Pro dipeptidase, found in Xanthomonas campestris pv. campestris (strain B100).